The chain runs to 247 residues: Aliphatic sulfonates import ATP-binding protein SsuB 2 (247 aa).

Residues 28–242 (VSVRGLQRRY…ALRPILLEEL (215 aa)) form the ABC transporter domain. An ATP-binding site is contributed by 60–67 (GESGCGKT).

The protein belongs to the ABC transporter superfamily. Aliphatic sulfonates importer (TC 3.A.1.17.2) family. The complex is composed of two ATP-binding proteins (SsuB), two transmembrane proteins (SsuC) and a solute-binding protein (SsuA).

It localises to the cell inner membrane. It carries out the reaction ATP + H2O + aliphatic sulfonate-[sulfonate-binding protein]Side 1 = ADP + phosphate + aliphatic sulfonateSide 2 + [sulfonate-binding protein]Side 1.. In terms of biological role, part of the ABC transporter complex SsuABC involved in aliphatic sulfonates import. Responsible for energy coupling to the transport system. The chain is Aliphatic sulfonates import ATP-binding protein SsuB 2 from Paraburkholderia xenovorans (strain LB400).